A 306-amino-acid polypeptide reads, in one-letter code: Bifunctional protein FolD 1 (306 aa).

Residues 170–172, Thr-199, and Val-240 each bind NADP(+); that span reads GRG. Residues 285 to 306 form a disordered region; sequence ARRTRSSRTPVRLPDSGAPAGR.

The protein belongs to the tetrahydrofolate dehydrogenase/cyclohydrolase family. As to quaternary structure, homodimer.

It catalyses the reaction (6R)-5,10-methylene-5,6,7,8-tetrahydrofolate + NADP(+) = (6R)-5,10-methenyltetrahydrofolate + NADPH. The enzyme catalyses (6R)-5,10-methenyltetrahydrofolate + H2O = (6R)-10-formyltetrahydrofolate + H(+). It functions in the pathway one-carbon metabolism; tetrahydrofolate interconversion. Catalyzes the oxidation of 5,10-methylenetetrahydrofolate to 5,10-methenyltetrahydrofolate and then the hydrolysis of 5,10-methenyltetrahydrofolate to 10-formyltetrahydrofolate. The sequence is that of Bifunctional protein FolD 1 from Salinispora tropica (strain ATCC BAA-916 / DSM 44818 / JCM 13857 / NBRC 105044 / CNB-440).